The primary structure comprises 267 residues: Putative glycosyltransferase 63 (267 aa).

This sequence belongs to the glycosyltransferase group 1 family. Glycosyltransferase 4 subfamily.

This Sulfolobus islandicus filamentous virus (isolate Iceland/Hveragerdi) (SIFV) protein is Putative glycosyltransferase 63 (SIFV0063).